Consider the following 227-residue polypeptide: Cytochrome c oxidase subunit 2 (227 aa).

At 1 to 14 the chain is on the mitochondrial intermembrane side; it reads MACPVQLGFQDAAS. The helical transmembrane segment at 15–45 threads the bilayer; sequence PIMEELTYFHDHTLMIVFLISSLVLYIISLM. The Mitochondrial matrix segment spans residues 46–59; it reads LTTELTHTSTMDAQ. A helical transmembrane segment spans residues 60-87; sequence EVETVWTILPAVILILIALPSLRILYMM. At 88 to 227 the chain is on the mitochondrial intermembrane side; the sequence is DEITTPSLTL…HFEEWLLAML (140 aa). Cu cation contacts are provided by histidine 161, cysteine 196, glutamate 198, cysteine 200, histidine 204, and methionine 207. Glutamate 198 lines the Mg(2+) pocket.

It belongs to the cytochrome c oxidase subunit 2 family. In terms of assembly, component of the cytochrome c oxidase (complex IV, CIV), a multisubunit enzyme composed of 14 subunits. The complex is composed of a catalytic core of 3 subunits MT-CO1, MT-CO2 and MT-CO3, encoded in the mitochondrial DNA, and 11 supernumerary subunits COX4I, COX5A, COX5B, COX6A, COX6B, COX6C, COX7A, COX7B, COX7C, COX8 and NDUFA4, which are encoded in the nuclear genome. The complex exists as a monomer or a dimer and forms supercomplexes (SCs) in the inner mitochondrial membrane with NADH-ubiquinone oxidoreductase (complex I, CI) and ubiquinol-cytochrome c oxidoreductase (cytochrome b-c1 complex, complex III, CIII), resulting in different assemblies (supercomplex SCI(1)III(2)IV(1) and megacomplex MCI(2)III(2)IV(2)). Found in a complex with TMEM177, COA6, COX18, COX20, SCO1 and SCO2. Interacts with TMEM177 in a COX20-dependent manner. Interacts with COX20. Interacts with COX16. It depends on Cu cation as a cofactor.

It is found in the mitochondrion inner membrane. The catalysed reaction is 4 Fe(II)-[cytochrome c] + O2 + 8 H(+)(in) = 4 Fe(III)-[cytochrome c] + 2 H2O + 4 H(+)(out). Component of the cytochrome c oxidase, the last enzyme in the mitochondrial electron transport chain which drives oxidative phosphorylation. The respiratory chain contains 3 multisubunit complexes succinate dehydrogenase (complex II, CII), ubiquinol-cytochrome c oxidoreductase (cytochrome b-c1 complex, complex III, CIII) and cytochrome c oxidase (complex IV, CIV), that cooperate to transfer electrons derived from NADH and succinate to molecular oxygen, creating an electrochemical gradient over the inner membrane that drives transmembrane transport and the ATP synthase. Cytochrome c oxidase is the component of the respiratory chain that catalyzes the reduction of oxygen to water. Electrons originating from reduced cytochrome c in the intermembrane space (IMS) are transferred via the dinuclear copper A center (CU(A)) of subunit 2 and heme A of subunit 1 to the active site in subunit 1, a binuclear center (BNC) formed by heme A3 and copper B (CU(B)). The BNC reduces molecular oxygen to 2 water molecules using 4 electrons from cytochrome c in the IMS and 4 protons from the mitochondrial matrix. The polypeptide is Cytochrome c oxidase subunit 2 (MT-CO2) (Cheirogaleus medius (Fat-tailed dwarf lemur)).